A 64-amino-acid chain; its full sequence is MANAAKTITVEQIGSAIRRHHSQRATLIGLNLNKIGRTAELQDTPEVRGMITKVQHLVRIVDEK.

It belongs to the universal ribosomal protein uL30 family. Part of the 50S ribosomal subunit.

The chain is Large ribosomal subunit protein uL30 from Rhodopseudomonas palustris (strain BisB18).